The primary structure comprises 184 residues: ATP synthase subunit b, chloroplastic (184 aa).

Residues 27-49 (LATNPINLSVVFGVLIFFGKGVL) traverse the membrane as a helical segment.

The protein belongs to the ATPase B chain family. As to quaternary structure, F-type ATPases have 2 components, F(1) - the catalytic core - and F(0) - the membrane proton channel. F(1) has five subunits: alpha(3), beta(3), gamma(1), delta(1), epsilon(1). F(0) has four main subunits: a(1), b(1), b'(1) and c(10-14). The alpha and beta chains form an alternating ring which encloses part of the gamma chain. F(1) is attached to F(0) by a central stalk formed by the gamma and epsilon chains, while a peripheral stalk is formed by the delta, b and b' chains.

Its subcellular location is the plastid. The protein resides in the chloroplast thylakoid membrane. F(1)F(0) ATP synthase produces ATP from ADP in the presence of a proton or sodium gradient. F-type ATPases consist of two structural domains, F(1) containing the extramembraneous catalytic core and F(0) containing the membrane proton channel, linked together by a central stalk and a peripheral stalk. During catalysis, ATP synthesis in the catalytic domain of F(1) is coupled via a rotary mechanism of the central stalk subunits to proton translocation. Functionally, component of the F(0) channel, it forms part of the peripheral stalk, linking F(1) to F(0). The protein is ATP synthase subunit b, chloroplastic of Lobularia maritima (Sweet alyssum).